Reading from the N-terminus, the 630-residue chain is Mesothelin (630 aa).

The N-terminal stretch at 1–36 is a signal peptide; sequence MALPTARPLLGSCGTPALGSLLFLLFSLGWVQPSRT. Asn57 carries N-linked (GlcNAc...) asparagine glycosylation. At Ser200 the chain carries Phosphoserine; by FAM20C. The interval 262–286 is required for megakaryocyte-potentiating factor activity; that stretch reads SIPQGIVAAWRQRSSRDPSWRQPER. A disulfide bond links Cys302 and Cys326. Asn388, Asn496, and Asn523 each carry an N-linked (GlcNAc...) asparagine glycan. Ser606 is lipidated: GPI-anchor amidated serine. The propeptide at 607–630 is removed in mature form; the sequence is GTPCLLGPGPVLTVLALLLASTLA.

It belongs to the mesothelin family. In terms of assembly, interacts with MUC16. Post-translationally, both MPF and the cleaved form of mesothelin are N-glycosylated. Proteolytically cleaved by a furin-like convertase to generate megakaryocyte-potentiating factor (MPF), and the cleaved form of mesothelin. Expressed in lung. Expressed at low levels in heart, placenta and kidney. Expressed in mesothelial cells. Highly expressed in mesotheliomas, ovarian cancers, and some squamous cell carcinomas (at protein level).

The protein resides in the cell membrane. The protein localises to the golgi apparatus. Its subcellular location is the secreted. Functionally, membrane-anchored forms may play a role in cellular adhesion. Megakaryocyte-potentiating factor (MPF) potentiates megakaryocyte colony formation in vitro. This is Mesothelin (MSLN) from Homo sapiens (Human).